Here is a 310-residue protein sequence, read N- to C-terminus: Protoheme IX farnesyltransferase (310 aa).

Transmembrane regions (helical) follow at residues 21–43, 48–70, 95–115, 118–138, 147–167, 174–194, 220–240, 243–263, and 289–309; these read LLKP…VAPV, MIAL…LNMW, GEAL…LGLA, LFAA…YSMW, IVIG…VATG, LFMF…LALF, VLVY…TGIG, LYLA…VRIW, and LFLH…GLGG.

The protein belongs to the UbiA prenyltransferase family. Protoheme IX farnesyltransferase subfamily. As to quaternary structure, interacts with CtaA.

Its subcellular location is the cell inner membrane. The enzyme catalyses heme b + (2E,6E)-farnesyl diphosphate + H2O = Fe(II)-heme o + diphosphate. The protein operates within porphyrin-containing compound metabolism; heme O biosynthesis; heme O from protoheme: step 1/1. In terms of biological role, converts heme B (protoheme IX) to heme O by substitution of the vinyl group on carbon 2 of heme B porphyrin ring with a hydroxyethyl farnesyl side group. The sequence is that of Protoheme IX farnesyltransferase from Cereibacter sphaeroides (strain KD131 / KCTC 12085) (Rhodobacter sphaeroides).